The sequence spans 393 residues: tRNA(Met) cytidine acetate ligase (393 aa).

Positions 81, 142, and 167 each coordinate ATP.

It belongs to the TmcAL family.

The protein resides in the cytoplasm. The catalysed reaction is cytidine(34) in elongator tRNA(Met) + acetate + ATP = N(4)-acetylcytidine(34) in elongator tRNA(Met) + AMP + diphosphate. In terms of biological role, catalyzes the formation of N(4)-acetylcytidine (ac(4)C) at the wobble position of elongator tRNA(Met), using acetate and ATP as substrates. First activates an acetate ion to form acetyladenylate (Ac-AMP) and then transfers the acetyl group to tRNA to form ac(4)C34. In Bacillus cereus (strain 03BB102), this protein is tRNA(Met) cytidine acetate ligase.